Reading from the N-terminus, the 44-residue chain is Conotoxin Rg11a (44 aa).

Cystine bridges form between C1-C15, C8-C22, C14-C30, and C21-C36.

Expressed by the venom duct.

The protein localises to the secreted. In terms of biological role, neurotoxin. Elicits hypersensibility when injected intracranially in mice. May act via potassium channel currents. The protein is Conotoxin Rg11a of Conus regius (Crown cone).